A 300-amino-acid chain; its full sequence is MSYRELVAELPREHAEALSDALVELGALSVSVEDADADTPDEQPLFGEPGLVPERTAWQHSRVIALVDATQDPAVLLAAAANEAGLAQTPRFELREVEEQDWVRLTQSQFEPIHIGEKIWVVPSWHDAPQPDALVLELDPGLAFGTGSHPTTRLCMEWLEQTVQPGQTVLDYGCGSGILAILAKKCGAGRVTGIDIDPQAVEAARHNSERNRADVTYGLPDDCPDGEFDIVVANILSNPLKLMASMLASKVKPGGRIALSGVLARQADEVASVYARYIDIAVWREHEGWVCLAGTRRESH.

S-adenosyl-L-methionine is bound by residues threonine 152, glycine 173, aspartate 195, and asparagine 234.

The protein belongs to the methyltransferase superfamily. PrmA family.

It localises to the cytoplasm. It catalyses the reaction L-lysyl-[protein] + 3 S-adenosyl-L-methionine = N(6),N(6),N(6)-trimethyl-L-lysyl-[protein] + 3 S-adenosyl-L-homocysteine + 3 H(+). In terms of biological role, methylates ribosomal protein L11. The protein is Ribosomal protein L11 methyltransferase of Burkholderia mallei (strain NCTC 10247).